A 196-amino-acid chain; its full sequence is MLERIKVCFTESIQTQIAAAEALPDAISRAAMTLVHSLLNGNKILCCGNGTSAANAQHFAASMINRFETERPSLPAIALNTDNVVLTAIANDRLHDEVYAKQVRALGHAGDVLLAISTRGNSRDIVKAVEAAVTRDMTIVALTGYDGGELAGLLGPQDVEIRIPSHHSARIQEMHMLTVNCLCDLIDNTLFLHQDD.

The SIS domain occupies 34 to 196 (LVHSLLNGNK…DNTLFLHQDD (163 aa)).

The protein belongs to the SIS family. DiaA subfamily. Homotetramer; dimer of dimers.

Functionally, required for the timely initiation of chromosomal replication via direct interactions with the DnaA initiator protein. The polypeptide is DnaA initiator-associating protein DiaA (Salmonella paratyphi A (strain ATCC 9150 / SARB42)).